The primary structure comprises 880 residues: Alanine--tRNA ligase (880 aa).

The Zn(2+) site is built by histidine 567, histidine 571, cysteine 669, and histidine 673.

The protein belongs to the class-II aminoacyl-tRNA synthetase family. The cofactor is Zn(2+).

It is found in the cytoplasm. The catalysed reaction is tRNA(Ala) + L-alanine + ATP = L-alanyl-tRNA(Ala) + AMP + diphosphate. Its function is as follows. Catalyzes the attachment of alanine to tRNA(Ala) in a two-step reaction: alanine is first activated by ATP to form Ala-AMP and then transferred to the acceptor end of tRNA(Ala). Also edits incorrectly charged Ser-tRNA(Ala) and Gly-tRNA(Ala) via its editing domain. This Bacillus mycoides (strain KBAB4) (Bacillus weihenstephanensis) protein is Alanine--tRNA ligase.